A 785-amino-acid polypeptide reads, in one-letter code: MTTLLNNHHNNNSLPIQISQQHVLINSNQNESNQPSSLFNSISPQKKLSPTLNSTSIPPPPPSSSSKYPLELSEKGQICNLKINLDKSYFTNGETISGKVNILLTERQCIKRVKLQLCGYEKIFQHAQHSNNTYQTFKFYSGNLNIPPLNVNIETTSLNSLPISNSENNSPILLPTTTSTQNSTLSPTLLSSNLNSKSSTTTTTTTGMMSSVSSLSSSFSQQLTTPIHEFESGVYEYPFSFQLPKYLAPSLNYIGYLSIFYLVHCKVDYSKGREWKDQKVMKSSELWISGINKQYQDYLLYNKTHFTSHKLAHYLNWLSFGTNTNSNNSNNNNNNNNNNNNNNNNNNNNNNNNNNNNNNQPSTITNNNINNNNNIGISNNYKSNPIEMAICLRENNCYIGSKATFFIQLKNPLNLKINSIRVELFQQISFIKTLSNSNSSSSGGSSNKNNNGGGIGNDRISNIQKSNKKSSGSHRYHYRNNSSDHNIDKTKVSQTQILLHNYDCRELFKNQTTTSSSSSQEILCSTNLQILIPFKIEDDQVFPTTRGFLSTVKHFFIISIPSISNFKLKIPVHLWQRFDDNNFTTISNNIHSLPFHTSNSFGNIRNSYSSSGSGSGSGSSNSNSNHSSSNYLNEQEENLDEQQQQNYDDEFYDDEDDEDNDRFKLNPPKEWKVLWLPKWKDESSITNCNLCDNTFTIIRRTHHCRACGGVFCEACSNQKVCLYGFGVNNKVRICLMCFDAVKAESSNSIYGSNINSSILPFKNGLPLQNVFSKKKVYKPPYLVHL.

Disordered regions lie at residues 29–69, 172–205, 326–367, 435–486, and 608–642; these read QNES…SKYP, ILLP…TTTT, SNNS…ITNN, SNSN…SDHN, and YSSS…LDEQ. Residues 173–205 show a composition bias toward low complexity; the sequence is LLPTTTSTQNSTLSPTLLSSNLNSKSSTTTTTT. Positions 435 to 450 are enriched in low complexity; the sequence is SNSNSSSSGGSSNKNN. Basic residues predominate over residues 466 to 478; it reads SNKKSSGSHRYHY. Over residues 608–633 the composition is skewed to low complexity; that stretch reads YSSSGSGSGSGSSNSNSNHSSSNYLN. The FYVE-type zinc finger occupies 682–742; the sequence is ESSITNCNLC…ICLMCFDAVK (61 aa). 8 residues coordinate Zn(2+): C688, C691, C704, C707, C712, C715, C734, and C737. Residues 688–738 form an RING-type; degenerate zinc finger; the sequence is CNLCDNTFTIIRRTHHCRACGGVFCEACSNQKVCLYGFGVNNKVRICLMCF.

This sequence belongs to the arrestin family.

This chain is Arrestin domain-containing protein D (adcD), found in Dictyostelium discoideum (Social amoeba).